The chain runs to 170 residues: NADH-dependent flavin reductase StyB (170 aa).

The protein belongs to the non-flavoprotein flavin reductase family. In terms of assembly, homodimer.

The enzyme catalyses a reduced flavin + NAD(+) = an oxidized flavin + NADH + 2 H(+). Its pathway is aromatic compound metabolism. In terms of biological role, reductase component of a two-component system that catalyzes the first step in the aerobic styrene degradation pathway by enantioselective epoxidation of the vinyl side chain. Utilizes NADH to reduce FAD, which is then transferred to the styrene monooxygenase StyA. The polypeptide is NADH-dependent flavin reductase StyB (styB) (Pseudomonas fluorescens).